A 566-amino-acid chain; its full sequence is ATP-binding protein SyrD (566 aa).

The ABC transmembrane type-1 domain occupies 22–301 (HPWLTFFTLL…LVSAMPMLAQ (280 aa)). Helical transmembrane passes span 24–44 (WLTF…IAVV), 61–81 (LFWF…ASLF), 132–152 (LLIM…IAYL), 158–178 (VVFA…LLFF), 250–270 (QLTL…FAVI), and 279–299 (VLAV…MPML). Residues 343–566 (IQLKNVHMNY…VKCAVEGKRA (224 aa)) enclose the ABC transporter domain. ATP is bound at residue 380–387 (GGNGCGKS).

It belongs to the ABC transporter superfamily. Dimer.

It localises to the cell inner membrane. Its function is as follows. ATP-driven efflux pump necessary for the secretion of syringomycin. May specifically bind syringomycin and translocate it to the periplasmic space. SyrD is also required for full expression of the syrB gene. This is ATP-binding protein SyrD (syrD) from Pseudomonas syringae pv. syringae.